Reading from the N-terminus, the 344-residue chain is Follistatin (344 aa).

A signal peptide spans 1–29 (MVRARHQPGGLCLLLLLLCQFMEDRSAQA). Residues 30–103 (GNCWLRQAKN…TCENVDCGPG (74 aa)) enclose the TB domain. 18 disulfides stabilise this stretch: Cys-32–Cys-55, Cys-42–Cys-88, Cys-56–Cys-91, Cys-95–Cys-106, Cys-100–Cys-116, Cys-118–Cys-150, Cys-122–Cys-143, Cys-132–Cys-164, Cys-168–Cys-179, Cys-173–Cys-189, Cys-192–Cys-225, Cys-196–Cys-218, Cys-207–Cys-239, Cys-245–Cys-256, Cys-250–Cys-267, Cys-270–Cys-302, Cys-274–Cys-295, and Cys-284–Cys-316. The 24-residue stretch at 94–117 (TCENVDCGPGKKCRMNKKNKPRCV) folds into the Follistatin-like 1 domain. A Kazal-like 1 domain is found at 112 to 166 (NKPRCVCAPDCSNITWKGPVCGLDGKTYRNECALLKARCKEQPELEVQYQGRCKK). N-linked (GlcNAc...) asparagine glycosylation occurs at Asn-124. Positions 167–190 (TCRDVFCPGSSTCVVDQTNNAYCV) constitute a Follistatin-like 2 domain. One can recognise a Kazal-like 2 domain in the interval 186 to 241 (NAYCVTCNRICPEPASSEQYLCGNDGVTYSSACHLRKATCLLGRSIGLAYEGKCIK). The Follistatin-like 3 domain maps to 244–268 (SCEDIQCTGGKKCLWDFKVGRGRCS). The Kazal-like 3 domain occupies 264 to 318 (RGRCSLCDELCPDSKSDEPVCASDNATYASECAMKEAACSSGVLLEVKHSGSCNS). The N-linked (GlcNAc...) asparagine glycan is linked to Asn-288. Residues 314 to 344 (GSCNSISEDTEEEEEDEDQDYSFPISSILEW) are disordered. The span at 321–333 (EDTEEEEEDEDQD) shows a compositional bias: acidic residues.

In terms of assembly, interacts with GDF11. Interacts with activin A/INHBA. Interacts with MYOSTATIN/MSTN. In terms of tissue distribution, isoform 1 is the predominant isoform in serum but is undetectable in follicular fluid. In the embryo, strong expression is seen in the palatal epithelia, including the medial edge epithelial and midline epithelial seam of the palatal shelves. Less pronounced expression is also seen throughout the palatal shelf and tongue mesenchyme.

It is found in the secreted. It localises to the nucleus. The protein localises to the nucleolus. Functionally, multifunctional regulatory protein whose primary function is to antagonize members of the transforming growth factor beta (TGF-beta) superfamily including activin, myostatin, GDF11 or bone morphogenetic proteins (BMPs). Mechanistically, binds to these ligands in the extracellular space, blocking their type II receptor-binding site to inhibit downstream signaling. Plays an essential role in muscle fiber formation and growth both by preventing the repressive effects of myostatin and through SMAD3/AKT/mTOR signaling independently of myostatin. Also promotes neural differentiation by antagonizing the action BMP4. Acts as a specific inhibitor of the biosynthesis and secretion of pituitary follicle stimulating hormone (FSH) by sequestering activin A/INHBA. On the other hand, translocates into the nucleus where it down-regulates rRNA synthesis and ribosome biogenesis to maintain cellular energy homeostasis by binding to rDNA. This is Follistatin from Homo sapiens (Human).